The primary structure comprises 459 residues: Argininosuccinate lyase (459 aa).

The protein belongs to the lyase 1 family. Argininosuccinate lyase subfamily.

Its subcellular location is the cytoplasm. The enzyme catalyses 2-(N(omega)-L-arginino)succinate = fumarate + L-arginine. Its pathway is amino-acid biosynthesis; L-arginine biosynthesis; L-arginine from L-ornithine and carbamoyl phosphate: step 3/3. The sequence is that of Argininosuccinate lyase from Prochlorococcus marinus subsp. pastoris (strain CCMP1986 / NIES-2087 / MED4).